The following is a 700-amino-acid chain: Ribonucleoside-diphosphate reductase subunit alpha (700 aa).

Substrate is bound by residues Thr-153, 169 to 170, Gly-198, 380 to 384, and 580 to 584; these read SC, NLCSE, and PTGSI. Residues Cys-170 and Cys-409 are joined by a disulfide bond. The active-site Proton acceptor is the Asn-380. The active-site Cysteine radical intermediate is Cys-382. The Proton acceptor role is filled by Glu-384.

This sequence belongs to the ribonucleoside diphosphate reductase large chain family. As to quaternary structure, tetramer of two alpha and two beta subunits.

The catalysed reaction is a 2'-deoxyribonucleoside 5'-diphosphate + [thioredoxin]-disulfide + H2O = a ribonucleoside 5'-diphosphate + [thioredoxin]-dithiol. Its activity is regulated as follows. Under complex allosteric control mediated by deoxynucleoside triphosphates and ATP binding. The type of nucleotide bound at the specificity site determines substrate preference. It seems probable that ATP makes the enzyme reduce CDP and UDP, dGTP favors ADP reduction and dTTP favors GDP reduction. In terms of biological role, provides the precursors necessary for DNA synthesis. Catalyzes the biosynthesis of deoxyribonucleotides from the corresponding ribonucleotides. The polypeptide is Ribonucleoside-diphosphate reductase subunit alpha (Bacillus subtilis (strain 168)).